Reading from the N-terminus, the 296-residue chain is UDP-N-acetylenolpyruvoylglucosamine reductase (296 aa).

Positions 19–203 (KVGGFAEYFS…LETTQKNLKK (185 aa)) constitute an FAD-binding PCMH-type domain. Arg-166 is an active-site residue. Ser-217 serves as the catalytic Proton donor. Glu-287 is an active-site residue.

This sequence belongs to the MurB family. FAD is required as a cofactor.

Its subcellular location is the cytoplasm. It carries out the reaction UDP-N-acetyl-alpha-D-muramate + NADP(+) = UDP-N-acetyl-3-O-(1-carboxyvinyl)-alpha-D-glucosamine + NADPH + H(+). It functions in the pathway cell wall biogenesis; peptidoglycan biosynthesis. Cell wall formation. This is UDP-N-acetylenolpyruvoylglucosamine reductase from Prochlorococcus marinus subsp. pastoris (strain CCMP1986 / NIES-2087 / MED4).